Reading from the N-terminus, the 349-residue chain is Hydroxymethylglutaryl-CoA synthase (349 aa).

The (3S)-3-hydroxy-3-methylglutaryl-CoA site is built by Asp30 and Ala31. The active-site Proton donor/acceptor is Glu82. (3S)-3-hydroxy-3-methylglutaryl-CoA-binding residues include Cys114 and Thr155. The active-site Acyl-thioester intermediate is Cys114. Arg203 contacts CoA. 2 residues coordinate (3S)-3-hydroxy-3-methylglutaryl-CoA: Thr205 and His238. His238 acts as the Proton donor/acceptor in catalysis. CoA is bound at residue Lys243. The (3S)-3-hydroxy-3-methylglutaryl-CoA site is built by Asn270 and Ser300.

This sequence belongs to the thiolase-like superfamily. Archaeal HMG-CoA synthase family. As to quaternary structure, interacts with acetoacetyl-CoA thiolase that catalyzes the precedent step in the pathway and with a DUF35 protein. The acetoacetyl-CoA thiolase/HMG-CoA synthase complex channels the intermediate via a fused CoA-binding site, which allows for efficient coupling of the endergonic thiolase reaction with the exergonic HMGCS reaction.

It carries out the reaction acetoacetyl-CoA + acetyl-CoA + H2O = (3S)-3-hydroxy-3-methylglutaryl-CoA + CoA + H(+). The protein operates within metabolic intermediate biosynthesis; (R)-mevalonate biosynthesis; (R)-mevalonate from acetyl-CoA: step 2/3. Catalyzes the condensation of acetyl-CoA with acetoacetyl-CoA to form 3-hydroxy-3-methylglutaryl-CoA (HMG-CoA). Functions in the mevalonate (MVA) pathway leading to isopentenyl diphosphate (IPP), a key precursor for the biosynthesis of isoprenoid compounds that are building blocks of archaeal membrane lipids. The chain is Hydroxymethylglutaryl-CoA synthase from Methanococcus maripaludis (strain C7 / ATCC BAA-1331).